We begin with the raw amino-acid sequence, 350 residues long: MQFVASEHPHRRLNPLNGQWVLVCPHRTQRPWSGQQEKAQKNELPEFDPTNPLCPGVTRPNGIQTPEYESTYVFENDFPALVEVVPVPPNNDDPLFQIAPARGNCRVMCFHPKSNLTLPTMSAAEIVVVIDEWISQFNELSAKYAWVQIFENKGAAMGCSNPHPHCQIWSCSFLPTEPQLKQERLRAYYATNERPMLADYVERELQRQERIVIENRDWLVVVPFWATWPFETMLISRNNNKRINDLTAEQRYNLALTIKELTTKYDNLFQCSFPYSMGWHGAPTGPEHAHASSAHWTLHAIYYPPLLRSASVRKFMVGFELLAMAQRDLTPEQAAQRLREVDGKCHYLEK.

Residues 31-52 (PWSGQQEKAQKNELPEFDPTNP) form a disordered region. Residue Cys54 coordinates Zn(2+). UDP-alpha-D-glucose is bound by residues 76–77 (ND) and Asn152. His163 is a binding site for Zn(2+). His165 acts as the Tele-UMP-histidine intermediate in catalysis. Residues Gln167, 314–317 (KFMV), and 319–320 (FE) contribute to the UDP-alpha-D-glucose site.

This sequence belongs to the galactose-1-phosphate uridylyltransferase type 1 family. In terms of assembly, homodimer. The cofactor is Zn(2+).

It carries out the reaction alpha-D-galactose 1-phosphate + UDP-alpha-D-glucose = alpha-D-glucose 1-phosphate + UDP-alpha-D-galactose. It participates in carbohydrate metabolism; galactose metabolism. This Drosophila melanogaster (Fruit fly) protein is Probable galactose-1-phosphate uridylyltransferase (Galt).